A 181-amino-acid chain; its full sequence is Oligoribonuclease (181 aa).

The region spanning 8-171 (LVWLDMEMTG…ADIYESIDEL (164 aa)) is the Exonuclease domain. Y129 is an active-site residue.

It belongs to the oligoribonuclease family.

The protein resides in the cytoplasm. In terms of biological role, 3'-to-5' exoribonuclease specific for small oligoribonucleotides. This chain is Oligoribonuclease, found in Bordetella bronchiseptica (strain ATCC BAA-588 / NCTC 13252 / RB50) (Alcaligenes bronchisepticus).